A 140-amino-acid polypeptide reads, in one-letter code: MASHHQLLCLNILGFRKPGISTEDYRNYMVNVHAPLVAGLMEKYGFLHFTMSHASEQSPQLMDQLYDAQFANTASYDCCVQIVFPSIECFVNMKADPYFKQTVGPDHEKFADTKRSQMMIGWFSPLLINGQQTDSLSAAE.

The 96-residue stretch at 18–113 folds into the EthD domain; sequence PGISTEDYRN…GPDHEKFADT (96 aa).

It belongs to the tpcK family.

It catalyses the reaction naphtopyrone YWA1 = norrubrofusarin + H2O + H(+). The protein operates within secondary metabolite biosynthesis. In terms of biological role, dehydratase; part of the gene cluster that mediates the biosynthesis of ustilaginoidins, dimeric gamma-naphthopyrones isolated from different fungal species. The first step in the biosynthesis of ustilaginoidins is the production of gamma-naphthopyrone precursor YWA1 by the non-reducing polyketide synthase ustP, via condensation of one acetyl-CoA starter unit with 6 malonyl-CoA units. YWA1 is then probably substrate of the ustZ to yield norrubrofusarin via a dehydration reaction. A key enzyme in the biosynthetic pathway is the laccase ustL, which catalyzes the oxidative dimerization of norrubrofusarin to ustilaginoidin A. It can produce the M- and P-atropisomers in varying amounts, depending on the reaction conditions. For the biosynthesis of 3-methylustilaginoid in derivatives such as chaetochromin A, a methylated derivative of YWA1 is required. The C-methylation is considered to be catalyzed by ustM, the phosphopantetheine attachment site of which indicates that it acts on the growing polyketide chain before release of the product. For the biosynthesis of chaetochromin A, it is assumed that saturation of the D2 double bond takes place before dimerization, and is probably catalyzed by an external reductase because no candidate gene was identified within the cluster. The protein is Dehydratase ustZ of Ustilaginoidea virens (Rice false smut fungus).